A 458-amino-acid chain; its full sequence is Flavonol 3-O-glucosyltransferase UGT76E12 (458 aa).

Residue His-25 is the Proton acceptor of the active site. His-25 is an an anthocyanidin binding site. The active-site Charge relay is Asp-118. Residues Thr-140, Ala-339, Gln-341, His-356, Trp-359, Asn-360, Ser-361, and Glu-364 each contribute to the UDP-alpha-D-glucose site. An an anthocyanidin-binding site is contributed by Gly-379. Residues Asp-380 and Gln-381 each coordinate UDP-alpha-D-glucose.

It belongs to the UDP-glycosyltransferase family.

It carries out the reaction a flavonol + UDP-alpha-D-glucose = a flavonol 3-O-beta-D-glucoside + UDP + H(+). It catalyses the reaction a 7-O-hydroxy-flavonol + UDP-alpha-D-glucose = a flavonol 7-O-beta-D-glucoside + UDP + H(+). Its function is as follows. Possesses quercetin 3-O-glucosyltransferase and 7-O-glucosyltransferase activities in vitro. The chain is Flavonol 3-O-glucosyltransferase UGT76E12 from Arabidopsis thaliana (Mouse-ear cress).